Reading from the N-terminus, the 101-residue chain is Large ribosomal subunit protein uL24 (101 aa).

It belongs to the universal ribosomal protein uL24 family. In terms of assembly, part of the 50S ribosomal subunit.

Its function is as follows. One of two assembly initiator proteins, it binds directly to the 5'-end of the 23S rRNA, where it nucleates assembly of the 50S subunit. Functionally, one of the proteins that surrounds the polypeptide exit tunnel on the outside of the subunit. This is Large ribosomal subunit protein uL24 from Streptococcus thermophilus (strain CNRZ 1066).